A 161-amino-acid chain; its full sequence is Nucleotide-binding protein Bcep1808_2648 (161 aa).

Belongs to the YajQ family.

Nucleotide-binding protein. In Burkholderia vietnamiensis (strain G4 / LMG 22486) (Burkholderia cepacia (strain R1808)), this protein is Nucleotide-binding protein Bcep1808_2648.